The sequence spans 196 residues: DNA replication complex GINS protein PSF1 (196 aa).

Belongs to the GINS1/PSF1 family. As to quaternary structure, component of the GINS complex which is a heterotetramer of gins1/psf1, gins2/psf2, gins3/psf3 and gins4/sld5. Component of the CMG helicase complex, composed of the mcm2-7 complex, the GINS complex and cdc45.

It is found in the nucleus. The protein localises to the chromosome. Required for correct functioning of the GINS complex, a complex that plays an essential role in the initiation of DNA replication, and progression of DNA replication forks. GINS complex is a core component of CDC45-MCM-GINS (CMG) helicase, the molecular machine that unwinds template DNA during replication, and around which the replisome is built. In Xenopus laevis (African clawed frog), this protein is DNA replication complex GINS protein PSF1.